The sequence spans 411 residues: Probable glutamate dehydrogenase 3 (411 aa).

Residue K102 is part of the active site.

Belongs to the Glu/Leu/Phe/Val dehydrogenases family.

It carries out the reaction L-glutamate + NAD(+) + H2O = 2-oxoglutarate + NH4(+) + NADH + H(+). The catalysed reaction is L-glutamate + NADP(+) + H2O = 2-oxoglutarate + NH4(+) + NADPH + H(+). This chain is Probable glutamate dehydrogenase 3 (GSH3), found in Arabidopsis thaliana (Mouse-ear cress).